A 496-amino-acid polypeptide reads, in one-letter code: uncharacterized protein (496 aa).

Mg(2+) is bound by residues Asp-36, Asp-81, Glu-300, Glu-302, Asp-321, Asp-323, and Asp-375.

This sequence belongs to the XPG/RAD2 endonuclease family. FEN1 subfamily. It depends on Mg(2+) as a cofactor.

This is an uncharacterized protein from Schizosaccharomyces pombe (strain 972 / ATCC 24843) (Fission yeast).